Here is a 401-residue protein sequence, read N- to C-terminus: Solute carrier family 22 member 17 (401 aa).

The next 10 membrane-spanning stretches (helical) occupy residues 10 to 30, 35 to 55, 69 to 89, 100 to 120, 184 to 203, 218 to 238, 247 to 267, 277 to 297, 309 to 329, and 336 to 356; these read GIVLLTLGLVGPCGVGGAAAG, IMALRFLLGFLLAGVDLGVYL, VALAGELVGVGGHFLFLGLAL, MITAPCILFLFYGWPGLFLES, NIWKNLLILGFTNFIAHAIR, FYLCSLLASGTAALACVFLGV, GILLLSMTLTGIASLVLLGLW, TFSVLGLFSSQASAILSTLLA, GLGLIMALGALGGLSCPAQRL, and FLQHVVLAACALLCILSIMLL.

The protein belongs to the major facilitator (TC 2.A.1) superfamily. Organic cation transporter (TC 2.A.1.19) family. Widely expressed.

It localises to the cell membrane. It is found in the vacuole membrane. Functionally, cell surface receptor for LCN2 (24p3) that plays a key role in iron homeostasis and transport. Able to bind iron-bound LCN2 (holo-24p3), followed by internalization of holo-24p3 and release of iron, thereby increasing intracellular iron concentration and leading to inhibition of apoptosis. Also binds iron-free LCN2 (apo-24p3), followed by internalization of apo-24p3 and its association with an intracellular siderophore, leading to iron chelation and iron transfer to the extracellular medium, thereby reducing intracellular iron concentration and resulting in apoptosis. In Mus musculus (Mouse), this protein is Solute carrier family 22 member 17 (Slc22a17).